Reading from the N-terminus, the 70-residue chain is Beta-defensin 43 (70 aa).

A signal peptide spans 1 to 22 (MRLLLSILGVLTLLSILPLARS). 2 cysteine pairs are disulfide-bonded: Cys-29–Cys-57 and Cys-36–Cys-50.

It belongs to the beta-defensin family.

The protein localises to the secreted. Has bactericidal activity. This Rattus norvegicus (Rat) protein is Beta-defensin 43 (Defb43).